The sequence spans 106 residues: Biogenesis of lysosome-related organelles complex 1 subunit 4 (106 aa).

The stretch at 53–106 (THSEGLSEQLKMTEKNILEMENLFDQIDQLCLFVQKAKSDLDKLEKLYNVVDRQ) forms a coiled coil.

The protein belongs to the BLOC1S4 family. As to quaternary structure, component of the biogenesis of lysosome-related organelles complex-1 (BLOC-1) composed at least of blos-1, blos-2, blos-4, dsbn-1, glo-2, mutd-1 and snpn-1. Interacts with glo-2.

Its function is as follows. Component of the biogenesis of lysosome-related organelles complex-1 (BLOC-1) involved in gut granule biogenesis. The protein is Biogenesis of lysosome-related organelles complex 1 subunit 4 (blos-4) of Caenorhabditis elegans.